Reading from the N-terminus, the 264-residue chain is MSKVTSSTLIKFKQEGKKFTALTAYDASFAGAFDSEGVDVLLVGDSLGMVLQGHNDTLPVTIADIAYHTACVKRGVARALLIADMPFMSYSTPEQTMNNAAILMQAGASMVKLEGGHWLLESVKMLTERGIPVCAHLGLTPQSVNVFGGFKVQGRDADNAQRILDEAKALQAAGAQLLVVECIPAPLAKAITEALTIPVIGIGAGADTDGQILVMHDVLGISSGYIPRFSKNYLKQTGEIRSAIRAYIDEVANGTFPAEEHTFN.

Residues Asp-45 and Asp-84 each coordinate Mg(2+). Residues 45-46 (DS), Asp-84, and Lys-112 each bind 3-methyl-2-oxobutanoate. Residue Glu-114 coordinates Mg(2+). Glu-181 functions as the Proton acceptor in the catalytic mechanism.

It belongs to the PanB family. As to quaternary structure, homodecamer; pentamer of dimers. Mg(2+) is required as a cofactor.

Its subcellular location is the cytoplasm. The enzyme catalyses 3-methyl-2-oxobutanoate + (6R)-5,10-methylene-5,6,7,8-tetrahydrofolate + H2O = 2-dehydropantoate + (6S)-5,6,7,8-tetrahydrofolate. The protein operates within cofactor biosynthesis; (R)-pantothenate biosynthesis; (R)-pantoate from 3-methyl-2-oxobutanoate: step 1/2. Catalyzes the reversible reaction in which hydroxymethyl group from 5,10-methylenetetrahydrofolate is transferred onto alpha-ketoisovalerate to form ketopantoate. This chain is 3-methyl-2-oxobutanoate hydroxymethyltransferase, found in Shewanella frigidimarina (strain NCIMB 400).